The following is a 972-amino-acid chain: MMSNLKLGVEVISARLKPREDYGGVNAYVELRFDDQKVITMTKIDDSSPVWNEKFFFNISDTEDLSNQFLDAYVYNKTSSITKSCLGKIRILGTAFLPYSEAVGLPYPLEKEKWSMFSSAAANGGELALKVFLTDNPSPKVPNLISTKKIPSKSRHKFHNIPTNESNHSPRGNQQSFQPQPPPPQSQTALPPPMMESSLYQAPRFGTPIPTTMGFNPNPPDYSIKETKPILGGGKRARSSDHDLVEPMEFLFIKIVKARNLPSMDLTGSLDPYIEVKLGNYTGKTKHFEKNQNPVWNEVFAFSKSNQQSNVLEVIVMDKDMVKDDFVGLIRFDLNQIPTRVAPDSPLAPEWYRVNNEKGGEIMLAVWFGTQADEAFSDATYSDALNAVNKSSLRSKVYHSPRLWYLRVNVIEAQDLVIVPDRTRLPNPYVKIRLNNQVVRTKPSHSLNPRWNEEFTLVAAEPFEDLIISIEDRVAPNREETLGEVHIPIGTIDKRIDDNRTVPNRWFSLKTENQRRVRFATTRLHLNVCLEGGYHVLDESTYYSSDFRPSMKELLSHKQPSFGVLELGILRIEGLNLSQEGKKETVDAYCVAKYGTKWVRTRTVTNCLNPRFNEQYTWEVYEPATVITIGVFDNNQINSGNGNKGDGKIGKIRVRISTLEAGRIYSHSYPLLVLRPSGLKKMGELHLAIRFSCSSMFQMLMQYWKPLLPKMHYARPLKVVQQEILRQHAVNLVAARLSRAEPPLRKEVVEYISDSNSHLWSMRKSRANLFRLSSVFSGLLGTGEWFQDICRWKKPVETTAIHIIFLVLVCSPEMILPVMSLCLFMLGVWNYRLRPRQPPHMDTRLSFADNIHPEELNEEFDTFPFSSQDPGIVKMRYERLRSIASRAQTVVGDIAGQGERVQALLSWRDPRATSIFMVLCLVSTVVLYVVPFKVFVLLAGLYIMRPPRFRGKTPPGPINFFRRLPAKTDCML.

The C2 1 domain occupies 1–107 (MMSNLKLGVE…PYSEAVGLPY (107 aa)). Residues 142 to 203 (PNLISTKKIP…MMESSLYQAP (62 aa)) form a disordered region. Basic residues predominate over residues 150-159 (IPSKSRHKFH). The segment covering 161 to 173 (IPTNESNHSPRGN) has biased composition (polar residues). Residues 179–194 (PQPPPPQSQTALPPPM) are compositionally biased toward pro residues. C2 domains are found at residues 232 to 352 (GGGK…PEWY), 384 to 507 (ALNA…NRWF), and 543 to 669 (YSSD…SHSY). Ca(2+) is bound by residues aspartate 265, aspartate 271, aspartate 318, aspartate 320, and aspartate 325. A run of 2 helical transmembrane segments spans residues 803 to 823 (IIFL…SLCL) and 924 to 944 (TVVL…LYIM).

The protein belongs to the MCTP family. It depends on Ca(2+) as a cofactor. Expressed in root hairs.

The protein localises to the membrane. Its subcellular location is the vesicle. In terms of biological role, may function as a signaling molecule by regulating the trafficking of other regulators. The sequence is that of Multiple C2 domain and transmembrane region protein 8 from Arabidopsis thaliana (Mouse-ear cress).